We begin with the raw amino-acid sequence, 851 residues long: M-phase phosphoprotein 8 (851 aa).

The disordered stretch occupies residues 21 to 54; sequence NIGRSPEVEGGGAAGEEKDAATKGTVAVGDSEED. A phosphoserine mark is found at Ser51, Ser85, and Ser136. Residues 59 to 118 form the Chromo domain; it reads FEVERILDMKCEGGKNLYKVRWKGYTSDDDTWEPEVHLEDCKEVLLEFRKKVAENKAKAV. The interval 80–87 is histone H3K9me3 binding; sequence WKGYTSDD. Residues 133–174 are disordered; it reads EADSDIDQQGDTKEDTSPRKKKKKIKYKEDKSPDDLRKKRAK. Thr144 is subject to Phosphothreonine. Phosphoserine; by CDK1 occurs at positions 149 and 164. The segment covering 159-169 has biased composition (basic and acidic residues); the sequence is YKEDKSPDDLR. Phosphoserine is present on residues Ser188, Ser263, Ser267, and Ser274. The interval 240–302 is disordered; that stretch reads REDVKDNRKT…KTGQDTVQES (63 aa). The span at 269–278 shows a compositional bias: acidic residues; it reads TLEDESEDFL. Residues 279–295 show a composition bias toward basic and acidic residues; it reads SDNKEKQNVRTAKDKTG. The residue at position 313 (Ser313) is a Phosphoserine. The segment at 315 to 428 is disordered; it reads EEAGTRVRRK…DKEEKARKEP (114 aa). Over residues 329 to 364 the composition is skewed to basic and acidic residues; sequence RKFEEPKEIKKLENTNNFLERKMIPKKQRNQDKGRS. Residue Thr379 is modified to Phosphothreonine; by CDK1. 2 positions are modified to phosphoserine: Ser386 and Ser394. Residues 401 to 428 are compositionally biased toward basic and acidic residues; that stretch reads EKERKNEPKEKYQKRYDFDKEEKARKEP. Thr447 carries the phosphothreonine modification. ANK repeat units follow at residues 591-620, 624-653, 657-686, and 690-719; these read TGMT…KVNG, NGTT…FVNV, NGET…DCNI, and HQNS…TLSR.

In terms of assembly, homodimer. Interacts (via chromo domain) with histone H3K9me3. Has the highest affinity for H3K9me3, and lesser affinity for H3K9me2 and H3K9me1. Component of the HUSH complex; at least composed of TASOR, PPHLN1 and MPHOSPH8. Interacts with DNMT3, EHMT1 and SETDB1. Interacts with MORC2; the interaction associateS MORC2 with the HUSH complex which recruits MORC2 to heterochromatic loci. Interacts with ZNF638; leading to recruitment of the HUSH complex to unintegrated retroviral DNA. Interacts with TASOR. Phosphorylated in M (mitotic) phase. Phosphorylation by CDK1 promotes dissociation from chromatin.

It localises to the nucleus. It is found in the chromosome. Its function is as follows. Heterochromatin component that specifically recognizes and binds methylated 'Lys-9' of histone H3 (H3K9me) and promotes recruitment of proteins that mediate epigenetic repression. Mediates recruitment of the HUSH complex to H3K9me3 sites: the HUSH complex is recruited to genomic loci rich in H3K9me3 and is required to maintain transcriptional silencing by promoting recruitment of SETDB1, a histone methyltransferase that mediates further deposition of H3K9me3, as well as MORC2. Binds H3K9me and promotes DNA methylation by recruiting DNMT3A to target CpG sites; these can be situated within the coding region of the gene. Mediates down-regulation of CDH1 expression. Also represses L1 retrotransposons in collaboration with MORC2 and, probably, SETDB1, the silencing is dependent of repressive epigenetic modifications, such as H3K9me3 mark. Silencing events often occur within introns of transcriptionally active genes, and lead to the down-regulation of host gene expression. The HUSH complex is also involved in the silencing of unintegrated retroviral DNA by being recruited by ZNF638: some part of the retroviral DNA formed immediately after infection remains unintegrated in the host genome and is transcriptionally repressed. The sequence is that of M-phase phosphoprotein 8 from Rattus norvegicus (Rat).